Here is a 513-residue protein sequence, read N- to C-terminus: Aspartic proteinase A2 (513 aa).

The signal sequence occupies residues 1–24 (MGVYSRAVAFSVFVSFLLFFTAYS). A propeptide spans 25-71 (KRNDGTFRVGLKKLKLDPNNRLATRFGSKQEEALRSSLRSYNNNLGG) (activation peptide). In terms of domain architecture, Peptidase A1 spans 89 to 510 (YYGEIAIGTP…DFGNEQVGFA (422 aa)). Residue D107 is part of the active site. 2 disulfide bridges follow: C120/C126 and C285/C289. The active site involves D294. The 106-residue stretch at 319–424 (VVSQQCKTVV…NEICERMPSP (106 aa)) folds into the Saposin B-type domain. 4 disulfide bridges follow: C324–C418, C349–C390, C355–C387, and C432–C469. N-linked (GlcNAc...) asparagine glycosylation occurs at N404.

The protein belongs to the peptidase A1 family. As to expression, expressed in seed pods and dry seeds.

Its subcellular location is the vacuole. Involved in the breakdown of propeptides of storage proteins in protein-storage vacuoles. In Arabidopsis thaliana (Mouse-ear cress), this protein is Aspartic proteinase A2 (APA2).